Consider the following 487-residue polypeptide: Bifunctional cytokinin biosynthesis protein (487 aa).

Residues 1–266 are adenylate isopentenyltransferase; it reads MESTNRFMIG…RMASDFCYAS (266 aa). Residues 267 to 487 are cytokinin riboside 5'-monophosphate phosphoribohydrolase; that stretch reads TSISFHPINE…FSRKGELEWV (221 aa). Residues E352, 380–381, 403–409, and T415 contribute to the substrate site; these read RK and GYGTLEE.

In the N-terminal section; belongs to the IPP transferase family. It in the C-terminal section; belongs to the LOG family.

It carries out the reaction dimethylallyl diphosphate + AMP = N(6)-(dimethylallyl)adenosine 5'-phosphate + diphosphate. The catalysed reaction is N(6)-(dimethylallyl)adenosine 5'-phosphate + H2O = N(6)-dimethylallyladenine + D-ribose 5-phosphate. It catalyses the reaction 9-ribosyl-trans-zeatin 5'-phosphate + H2O = trans-zeatin + D-ribose 5-phosphate. It functions in the pathway secondary metabolite biosynthesis. In terms of biological role, bifunctional cytokinin synthesis protein; part of the gene cluster that mediates the biosynthesis of cytokinins such as fusatin, fusatinic acids or 8-oxofusatin, known for their growth promoting and anti-senescence activities toward host plants. FCK1 is a bifunctional enzyme that performs the first steps in the biosynthesis of Fusarium cytokinins. It first condenses adenosine monophosphate (AMP) with dimethylallyl diphosphate (DMAPP) to yield isoprenyl adenosine monophosphate. It then catalyzes the removal of the phosphoribose to produce isopentenylaldehyde. The cytochrome P450 monooxygenase then converts isopentenylaldehyde to trans-zeatin. A condensation step converts trans-zeatin to fusatin which is further modified to produce fusatinic acid. The mechanism for oxidation of fusatin to fusatinic acid remains unknown. 8-oxofusatin could be produced through several pathways, via direct oxygenation of fusatin, or via the 8-oxo-pentenyladenine intermediate which itself must arise from either the prenylation of 8-oxo-AMP by FCK1 and/or oxygenation of isopentenylaldehyde. Both the FCK3 and FCK4 enzymes act downstream of the identified cytokinins to produce yet unidentified compounds. The polypeptide is Bifunctional cytokinin biosynthesis protein (Fusarium pseudograminearum (strain CS3096) (Wheat and barley crown-rot fungus)).